We begin with the raw amino-acid sequence, 78 residues long: Small integral membrane protein 5 (78 aa).

A helical transmembrane segment spans residues 32–52 (ILAFSVLVVFTATVVLLLLIA).

The protein resides in the membrane. The chain is Small integral membrane protein 5 (SMIM5) from Bos taurus (Bovine).